The chain runs to 149 residues: 3-dehydroquinate dehydratase (149 aa).

Tyrosine 23 (proton acceptor) is an active-site residue. Positions 75, 81, and 88 each coordinate substrate. The active-site Proton donor is the histidine 101. Residues 102 to 103 (LS) and arginine 112 contribute to the substrate site.

This sequence belongs to the type-II 3-dehydroquinase family. As to quaternary structure, homododecamer.

The enzyme catalyses 3-dehydroquinate = 3-dehydroshikimate + H2O. The protein operates within metabolic intermediate biosynthesis; chorismate biosynthesis; chorismate from D-erythrose 4-phosphate and phosphoenolpyruvate: step 3/7. In terms of biological role, catalyzes a trans-dehydration via an enolate intermediate. The chain is 3-dehydroquinate dehydratase from Stenotrophomonas maltophilia (strain R551-3).